Here is a 185-residue protein sequence, read N- to C-terminus: Dense granule protein 2 (185 aa).

Residues Met1–Ala23 form the signal peptide. N-linked (GlcNAc...) asparagine glycosylation is present at Asn18. Disordered regions lie at residues Gly41–Ala75 and Ala142–Gln185. The segment covering Pro43–Glu66 has biased composition (basic and acidic residues).

In terms of processing, may also be O-glycosylated. The N-terminus is blocked.

It localises to the parasitophorous vacuole. In terms of biological role, major granular component involved in excreted-secreted antigen (ESA) immunity. Possibly acts in conjunction with GRA1. This chain is Dense granule protein 2 (GRA2), found in Toxoplasma gondii.